Reading from the N-terminus, the 643-residue chain is Threonine--tRNA ligase (643 aa).

A TGS domain is found at 1–61; that stretch reads MPIITLPDGA…SVNANINIIT (61 aa). Residues 242-533 are catalytic; sequence DHRKIGKKLD…LIEEYEGKFP (292 aa). Positions 333, 384, and 510 each coordinate Zn(2+).

The protein belongs to the class-II aminoacyl-tRNA synthetase family. As to quaternary structure, homodimer. Requires Zn(2+) as cofactor.

It is found in the cytoplasm. The enzyme catalyses tRNA(Thr) + L-threonine + ATP = L-threonyl-tRNA(Thr) + AMP + diphosphate + H(+). Catalyzes the attachment of threonine to tRNA(Thr) in a two-step reaction: L-threonine is first activated by ATP to form Thr-AMP and then transferred to the acceptor end of tRNA(Thr). Also edits incorrectly charged L-seryl-tRNA(Thr). In Prochlorococcus marinus (strain SARG / CCMP1375 / SS120), this protein is Threonine--tRNA ligase.